The following is a 387-amino-acid chain: 1-deoxy-D-xylulose 5-phosphate reductoisomerase (387 aa).

NADPH contacts are provided by threonine 10, glycine 11, serine 12, isoleucine 13, glycine 36, asparagine 38, and asparagine 122. Lysine 123 contributes to the 1-deoxy-D-xylulose 5-phosphate binding site. An NADPH-binding site is contributed by glutamate 124. Mn(2+) is bound at residue aspartate 148. Positions 149, 150, 174, and 197 each coordinate 1-deoxy-D-xylulose 5-phosphate. Position 150 (glutamate 150) interacts with Mn(2+). Glycine 203 serves as a coordination point for NADPH. The 1-deoxy-D-xylulose 5-phosphate site is built by serine 210, asparagine 215, lysine 216, and glutamate 219. Glutamate 219 is a Mn(2+) binding site.

Belongs to the DXR family. Mg(2+) is required as a cofactor. It depends on Mn(2+) as a cofactor.

It carries out the reaction 2-C-methyl-D-erythritol 4-phosphate + NADP(+) = 1-deoxy-D-xylulose 5-phosphate + NADPH + H(+). It functions in the pathway isoprenoid biosynthesis; isopentenyl diphosphate biosynthesis via DXP pathway; isopentenyl diphosphate from 1-deoxy-D-xylulose 5-phosphate: step 1/6. Functionally, catalyzes the NADPH-dependent rearrangement and reduction of 1-deoxy-D-xylulose-5-phosphate (DXP) to 2-C-methyl-D-erythritol 4-phosphate (MEP). The chain is 1-deoxy-D-xylulose 5-phosphate reductoisomerase from Chloroherpeton thalassium (strain ATCC 35110 / GB-78).